We begin with the raw amino-acid sequence, 220 residues long: Uracil-DNA glycosylase (220 aa).

Asp60 functions as the Proton acceptor in the catalytic mechanism.

It belongs to the uracil-DNA glycosylase (UDG) superfamily. UNG family.

The protein resides in the cytoplasm. It catalyses the reaction Hydrolyzes single-stranded DNA or mismatched double-stranded DNA and polynucleotides, releasing free uracil.. Excises uracil residues from the DNA which can arise as a result of misincorporation of dUMP residues by DNA polymerase or due to deamination of cytosine. This is Uracil-DNA glycosylase from Francisella tularensis subsp. novicida (strain U112).